Consider the following 133-residue polypeptide: Large ribosomal subunit protein eL19 (133 aa).

The interval 55-83 is disordered; that stretch reads RGISGARKKPRRKGPGSRKGGKYSKLPRK. A compositionally biased stretch (basic residues) spans 60 to 83; that stretch reads ARKKPRRKGPGSRKGGKYSKLPRK.

Belongs to the eukaryotic ribosomal protein eL19 family. In terms of assembly, part of the 50S ribosomal subunit.

Its function is as follows. Binds to the 23S rRNA. This is Large ribosomal subunit protein eL19 from Korarchaeum cryptofilum (strain OPF8).